The following is a 1434-amino-acid chain: Probable ATP-dependent RNA helicase spindle-E (1434 aa).

The 168-residue stretch at Leu-125–Val-292 folds into the Helicase ATP-binding domain. Position 138–145 (Gly-138–Thr-145) interacts with ATP. Positions Asp-238–His-241 match the DEAH box motif. The Helicase C-terminal domain occupies Lys-339–Asn-526. A Tudor domain is found at Ala-938–Gln-1001.

Belongs to the DEAD box helicase family. DEAH subfamily.

The protein localises to the cytoplasm. The catalysed reaction is ATP + H2O = ADP + phosphate + H(+). Probable ATP-binding RNA helicase which plays a central role during spermatogenesis and oogenesis by repressing transposable elements and preventing their mobilization, which is essential for the germline integrity. Acts via the piRNA metabolic process, which mediates the repression of transposable elements during meiosis by forming complexes composed of piRNAs and Piwi and govern the methylation and subsequent repression of transposons. Involved in the repression of LTR retrotransposon copia. Also involved in telomere regulation by repressing specialized telomeric retroelements HeT-A, TAHRE, and TART; Drosophila telomeres being maintained by transposition of specialized telomeric retroelements. Involved in telomeric trans-silencing, a repression mechanism by which a transposon or a transgene inserted in subtelomeric heterochromatin has the capacity to repress in trans in the female germline, a homologous transposon, or transgene located in euchromatin. Involved in the repression of testis-expressed Stellate genes by the homologous Su(Ste) repeats. Required for anteroposterior and dorsoventral axis formation during oogenesis. In Drosophila sechellia (Fruit fly), this protein is Probable ATP-dependent RNA helicase spindle-E (spn-E).